Reading from the N-terminus, the 527-residue chain is Bifunctional purine biosynthesis protein PurH (527 aa).

The 149-residue stretch at M1 to T149 folds into the MGS-like domain.

Belongs to the PurH family.

It catalyses the reaction (6R)-10-formyltetrahydrofolate + 5-amino-1-(5-phospho-beta-D-ribosyl)imidazole-4-carboxamide = 5-formamido-1-(5-phospho-D-ribosyl)imidazole-4-carboxamide + (6S)-5,6,7,8-tetrahydrofolate. The catalysed reaction is IMP + H2O = 5-formamido-1-(5-phospho-D-ribosyl)imidazole-4-carboxamide. Its pathway is purine metabolism; IMP biosynthesis via de novo pathway; 5-formamido-1-(5-phospho-D-ribosyl)imidazole-4-carboxamide from 5-amino-1-(5-phospho-D-ribosyl)imidazole-4-carboxamide (10-formyl THF route): step 1/1. It functions in the pathway purine metabolism; IMP biosynthesis via de novo pathway; IMP from 5-formamido-1-(5-phospho-D-ribosyl)imidazole-4-carboxamide: step 1/1. This chain is Bifunctional purine biosynthesis protein PurH, found in Stenotrophomonas maltophilia (strain R551-3).